Reading from the N-terminus, the 76-residue chain is Protein TraJ (76 aa).

The protein localises to the cytoplasm. This protein is essential for positively regulating the expression of transfer genes that are involved in the conjugal transfer of DNA between bacterial cells. In Escherichia coli, this protein is Protein TraJ (traJ).